The chain runs to 391 residues: Elongation factor Tu 1 (391 aa).

Residues 10-201 (KPHVNIGTIG…AVDSYIPTPE (192 aa)) enclose the tr-type G domain. The tract at residues 19 to 26 (GHVDHGKT) is G1. A GTP-binding site is contributed by 19–26 (GHVDHGKT). Thr-26 contributes to the Mg(2+) binding site. A G2 region spans residues 55–59 (GITIS). The segment at 76-79 (DCPG) is G3. Residues 76 to 80 (DCPGH) and 131 to 134 (NKVD) contribute to the GTP site. The G4 stretch occupies residues 131–134 (NKVD). Residues 169-171 (SAL) are G5.

This sequence belongs to the TRAFAC class translation factor GTPase superfamily. Classic translation factor GTPase family. EF-Tu/EF-1A subfamily. Monomer.

The protein resides in the cytoplasm. The enzyme catalyses GTP + H2O = GDP + phosphate + H(+). Functionally, GTP hydrolase that promotes the GTP-dependent binding of aminoacyl-tRNA to the A-site of ribosomes during protein biosynthesis. This chain is Elongation factor Tu 1, found in Rhizobium etli (strain ATCC 51251 / DSM 11541 / JCM 21823 / NBRC 15573 / CFN 42).